The primary structure comprises 352 residues: Protein-glutamate methylesterase/protein-glutamine glutaminase 2 (352 aa).

Residues 1 to 116 (MVVDDSAVVR…KQFLTDSADE (116 aa)) form the Response regulatory domain. The residue at position 50 (Asp50) is a 4-aspartylphosphate. The CheB-type methylesterase domain maps to 162–352 (AQTTERIVAI…MAREIVTQLQ (191 aa)). Residues Ser174, His200, and Asp296 contribute to the active site.

It belongs to the CheB family. Post-translationally, phosphorylated by CheA. Phosphorylation of the N-terminal regulatory domain activates the methylesterase activity.

It localises to the cytoplasm. It carries out the reaction [protein]-L-glutamate 5-O-methyl ester + H2O = L-glutamyl-[protein] + methanol + H(+). It catalyses the reaction L-glutaminyl-[protein] + H2O = L-glutamyl-[protein] + NH4(+). Involved in chemotaxis. Part of a chemotaxis signal transduction system that modulates chemotaxis in response to various stimuli. Catalyzes the demethylation of specific methylglutamate residues introduced into the chemoreceptors (methyl-accepting chemotaxis proteins or MCP) by CheR. Also mediates the irreversible deamidation of specific glutamine residues to glutamic acid. The polypeptide is Protein-glutamate methylesterase/protein-glutamine glutaminase 2 (Xanthomonas campestris pv. campestris (strain ATCC 33913 / DSM 3586 / NCPPB 528 / LMG 568 / P 25)).